We begin with the raw amino-acid sequence, 430 residues long: Glutamyl-tRNA reductase (430 aa).

Substrate-binding positions include 49–52 (TCNR), S109, 114–116 (EGQ), and Q120. C50 (nucleophile) is an active-site residue. 189-194 (GAGKMA) provides a ligand contact to NADP(+).

This sequence belongs to the glutamyl-tRNA reductase family. As to quaternary structure, homodimer.

It catalyses the reaction (S)-4-amino-5-oxopentanoate + tRNA(Glu) + NADP(+) = L-glutamyl-tRNA(Glu) + NADPH + H(+). The protein operates within porphyrin-containing compound metabolism; protoporphyrin-IX biosynthesis; 5-aminolevulinate from L-glutamyl-tRNA(Glu): step 1/2. It functions in the pathway porphyrin-containing compound metabolism; chlorophyll biosynthesis. Functionally, catalyzes the NADPH-dependent reduction of glutamyl-tRNA(Glu) to glutamate 1-semialdehyde (GSA). The protein is Glutamyl-tRNA reductase of Crocosphaera subtropica (strain ATCC 51142 / BH68) (Cyanothece sp. (strain ATCC 51142)).